The chain runs to 159 residues: MQQGWLSNWLVKHEVVHRSLGFDHRGIETLQIKAGDWDSIAVILYVYGYNYLRSQCAYDVAPGGSLASVYHLTRIQYGIDNPEEVCIKVFVQKDNPRIPSVFWIWRSADFQERESYDMVGISYDNHPRLKRILMPESWIGWPLRKDYITPNFYEIQDAH.

Belongs to the complex I 30 kDa subunit family. As to quaternary structure, NDH is composed of at least 16 different subunits, 5 of which are encoded in the nucleus.

Its subcellular location is the plastid. The protein localises to the chloroplast thylakoid membrane. It catalyses the reaction a plastoquinone + NADH + (n+1) H(+)(in) = a plastoquinol + NAD(+) + n H(+)(out). The catalysed reaction is a plastoquinone + NADPH + (n+1) H(+)(in) = a plastoquinol + NADP(+) + n H(+)(out). NDH shuttles electrons from NAD(P)H:plastoquinone, via FMN and iron-sulfur (Fe-S) centers, to quinones in the photosynthetic chain and possibly in a chloroplast respiratory chain. The immediate electron acceptor for the enzyme in this species is believed to be plastoquinone. Couples the redox reaction to proton translocation, and thus conserves the redox energy in a proton gradient. This chain is NAD(P)H-quinone oxidoreductase subunit J, chloroplastic, found in Agrostis stolonifera (Creeping bentgrass).